Here is a 504-residue protein sequence, read N- to C-terminus: MAKFQGYLEFDGARQQSFLYPLFFREYIYVLAYDHGLNRLNRNRSIFLENSDYGKKYSSLIVKRLILRMYEQNRLIIPTKDLNQNPFLGHTNLVDYQMISILFAVIVEIPFSLRLGSSFEGKQLKKSYNLQSIHSIFPFLEDKLSHFNYVVDVLIPYPIHLEILVQTLRYRVKDPSSLHFFRFCLYEYCNWKNFDIKKKSILNPRFFLFLYNSHVCEYESIFFFLRKRSSHLRSTSYEVLFERILFYGKIQHFLKVFVNTFPAILGLLKDPFIHYVRYHGKCILATKDTPLLMNKWKYFFVNLWQCYFSVWFQSQKVNIKQLSKDNLEFLGYLSSLRLNPLVVRSQMLENAFLIDNVRIKLDSKIPISSIIGSLAKDKFCNVLGHPISKAAWTDSSDSDILNRFVRICRNISHYYSGSSKKKNLYRIKYILRLCCVKTLARKHKSTVRAFLKRLGSGLLEEFLTGEDQVLSLIFPRSYYASKRLYRVRIWYLDILYLNDLVNHE.

This sequence belongs to the intron maturase 2 family. MatK subfamily.

Its subcellular location is the plastid. The protein resides in the chloroplast. In terms of biological role, usually encoded in the trnK tRNA gene intron. Probably assists in splicing its own and other chloroplast group II introns. The chain is Maturase K from Lobularia maritima (Sweet alyssum).